The primary structure comprises 224 residues: Putative ribonuclease Z (224 aa).

Positions 120 and 184 each coordinate Zn(2+).

The protein belongs to the RNase Z family. In terms of assembly, homodimer. Requires Zn(2+) as cofactor.

The catalysed reaction is Endonucleolytic cleavage of RNA, removing extra 3' nucleotides from tRNA precursor, generating 3' termini of tRNAs. A 3'-hydroxy group is left at the tRNA terminus and a 5'-phosphoryl group is left at the trailer molecule.. Functionally, zinc phosphodiesterase, which displays some tRNA 3'-processing endonuclease activity. Probably involved in tRNA maturation, by removing a 3'-trailer from precursor tRNA. This chain is Putative ribonuclease Z (rnz), found in Mycobacterium tuberculosis (strain CDC 1551 / Oshkosh).